Consider the following 192-residue polypeptide: Cytochrome b-245 light chain (192 aa).

Topologically, residues 2–7 are cytoplasmic; the sequence is GQIEWA. A helical membrane pass occupies residues 8-30; the sequence is MWANEQALASGLILITGGIVATA. Over 31–35 the chain is Extracellular; it reads GRFTQ. Residues 36-53 form a helical membrane-spanning segment; that stretch reads WYFGAYSIAAGVLICLLE. At 54 to 69 the chain is on the cytoplasmic side; the sequence is YPRGKRKKGSTMERCG. Residues 70–80 lie within the membrane without spanning it; the sequence is QKYLTSVVKLF. Over 81–86 the chain is Cytoplasmic; sequence GPLTRN. The chain crosses the membrane as a helical span at residues 87–104; it reads YYVRAALHFLLSVPAGFL. Residue leucine 105 is a topological domain, extracellular. The chain crosses the membrane as a helical span at residues 106–126; it reads ATILGTVCLAIASVIYLLAAI. The Cytoplasmic segment spans residues 127-192; the sequence is RGEQWTPIEP…NPMPVTDEVV (66 aa). Residues 134-192 form a disordered region; sequence IEPKPKERPQVGGTIKQPPTNPPPRPPAEVRKKPSEGEEEAASAGGPQVNPMPVTDEVV. At threonine 147 the chain carries Phosphothreonine. A Glycyl lysine isopeptide (Lys-Gly) (interchain with G-Cter in ubiquitin) cross-link involves residue lysine 149. 2 positions are modified to phosphoserine: serine 168 and serine 176.

The protein belongs to the p22phox family. As to quaternary structure, component of the phagocyte NADPH oxidase core complex/cytochrome b558 complex, composed of CYBB (heavy chain (beta)) and CYBA (light chain (alpha)). Component of the phagocyte NADPH oxidase complex composed of an obligatory core heterodimer formed by the membrane proteins CYBA and CYBB and the cytosolic regulatory subunits NCF1/p47-phox, NCF2/p67-phox, NCF4/p40-phox and the small GTPase RAC1 or RAC2. Interacts with NCF1 (via SH3 domain). Interacts with SH3PXD2A. Interacts with DUOX1, DUOX2 and TPO. Interacts with NOX4; this interaction mediates superoxide generation. Interacts with calprotectin (S100A8/9). Interacts with GBP7. Interacts with NOXO1. Forms a heterodimer with NOX3 and is essential for activity and cell membrane localization of NOX3. Interacts with NOX1. Post-translationally, ubiquitinated at Lys-149 likely by RNF145. Phosphorylation at Thr-147 enhances NADPH oxidase activity by promoting NCF1/p47-phox binding. In terms of tissue distribution, the strongest level of expression is found in kidney, peritoneal neutrophils and peritoneal macrophages, and a lower level in spleen and small intestine. Very low level of expression can be noted in brain, liver, testis, and heart.

The protein resides in the cell membrane. Subunit of NADPH oxidase complexes that is required for the NADPH oxidase activity that generates, in various cell types, superoxide from molecular oxygen utilizing NADPH as an electron donor. Subunit of the phagocyte NADPH oxidase complex that mediates the transfer of electrons from cytosolic NADPH to O2 to produce the superoxide anion (O2(-)). In the activated complex, electrons are first transferred from NADPH to flavin adenine dinucleotide (FAD) and subsequently transferred via two heme molecules to molecular oxygen, producing superoxide through an outer-sphere reaction. Activation of the NADPH oxidase complex is initiated by the assembly of cytosolic subunits of the NADPH oxidase complex with the core NADPH oxidase complex to form a complex at the plasma membrane or phagosomal membrane. This activation process is initiated by phosphorylation dependent binding of the cytosolic NCF1/p47-phox subunit to the C-terminus of CYBA/p22-phox. Aassociates with NOX3 to form a functional NADPH oxidase constitutively generating superoxide. This chain is Cytochrome b-245 light chain, found in Mus musculus (Mouse).